Reading from the N-terminus, the 72-residue chain is Small, acid-soluble spore protein C (72 aa).

This sequence belongs to the alpha/beta-type SASP family.

SASP are bound to spore DNA. They are double-stranded DNA-binding proteins that cause DNA to change to an a-like conformation. They protect the DNA backbone from chemical and enzymatic cleavage and are thus involved in dormant spore's high resistance to UV light. This Bacillus subtilis (strain 168) protein is Small, acid-soluble spore protein C (sspC).